Reading from the N-terminus, the 201-residue chain is Large ribosomal subunit protein uL4 (201 aa).

The disordered stretch occupies residues 46 to 71 (QKTRAEVIGSGKKPWRQKGTGRARAG).

It belongs to the universal ribosomal protein uL4 family. Part of the 50S ribosomal subunit.

One of the primary rRNA binding proteins, this protein initially binds near the 5'-end of the 23S rRNA. It is important during the early stages of 50S assembly. It makes multiple contacts with different domains of the 23S rRNA in the assembled 50S subunit and ribosome. In terms of biological role, forms part of the polypeptide exit tunnel. This chain is Large ribosomal subunit protein uL4, found in Shewanella sediminis (strain HAW-EB3).